Reading from the N-terminus, the 292-residue chain is G1/S-specific cyclin-D3 (292 aa).

Positions 27–152 (VLQSLLRLEE…LVLGKLKWDL (126 aa)) constitute a Cyclin N-terminal domain. The tract at residues 254-292 (SLREASQTSSSPAPKAPRGSSSQGPSQTSTPTDVTAIHL) is disordered. 2 positions are modified to phosphoserine: Ser264 and Ser279. Residues 272–285 (GSSSQGPSQTSTPT) show a composition bias toward low complexity. The residue at position 283 (Thr283) is a Phosphothreonine.

Belongs to the cyclin family. Cyclin D subfamily. As to quaternary structure, interacts with the CDK4 and CDK6 protein kinases to form a serine/threonine kinase holoenzyme complex. The cyclin subunit imparts substrate specificity to the complex. Interacts with ATF5. Interacts with EIF3K. Component of the ternary complex cyclin D/CDK4/CDKN1B required for nuclear translocation and modulation of CDK4-mediated kinase activity. Can form similar complexes with either CDKN1A or CDKN2A. Post-translationally, phosphorylation at Thr-283 by MAP kinases is required for ubiquitination and degradation by the DCX(AMBRA1) complex. In terms of processing, ubiquitinated by the DCX(AMBRA1) complex during the transition from G1 to S cell phase, leading to its degradation: ubiquitination is dependent on Thr-283 phosphorylation. The DCX(AMBRA1) complex represents the major regulator of CCND3 stability during the G1/S transition. Polyubiquitinated by the SCF(FBXL2) complex, leading to proteasomal degradation.

The protein localises to the nucleus. The protein resides in the cytoplasm. Regulatory component of the cyclin D3-CDK4 (DC) complex that phosphorylates and inhibits members of the retinoblastoma (RB) protein family including RB1 and regulates the cell-cycle during G(1)/S transition. Phosphorylation of RB1 allows dissociation of the transcription factor E2F from the RB/E2F complex and the subsequent transcription of E2F target genes which are responsible for the progression through the G(1) phase. Hypophosphorylates RB1 in early G(1) phase. Cyclin D-CDK4 complexes are major integrators of various mitogenenic and antimitogenic signals. Component of the ternary complex, cyclin D3/CDK4/CDKN1B, required for nuclear translocation and activity of the cyclin D-CDK4 complex. Shows transcriptional coactivator activity with ATF5 independently of CDK4. This is G1/S-specific cyclin-D3 from Homo sapiens (Human).